We begin with the raw amino-acid sequence, 196 residues long: 3-isopropylmalate dehydratase small subunit (196 aa).

This sequence belongs to the LeuD family. LeuD type 1 subfamily. As to quaternary structure, heterodimer of LeuC and LeuD.

It carries out the reaction (2R,3S)-3-isopropylmalate = (2S)-2-isopropylmalate. The protein operates within amino-acid biosynthesis; L-leucine biosynthesis; L-leucine from 3-methyl-2-oxobutanoate: step 2/4. In terms of biological role, catalyzes the isomerization between 2-isopropylmalate and 3-isopropylmalate, via the formation of 2-isopropylmaleate. This Streptococcus thermophilus (strain CNRZ 1066) protein is 3-isopropylmalate dehydratase small subunit.